Here is a 169-residue protein sequence, read N- to C-terminus: Cell division inhibitor SulA (169 aa).

Positions 106-112 are ftsZ binding; that stretch reads ALRTGNY. The interval 162–169 is lon protease binding; the sequence is KIHSNLYH.

Belongs to the SulA family. As to quaternary structure, interacts with FtsZ. In terms of processing, is rapidly cleaved and degraded by the Lon protease once DNA damage is repaired.

Functionally, component of the SOS system and an inhibitor of cell division. Accumulation of SulA causes rapid cessation of cell division and the appearance of long, non-septate filaments. In the presence of GTP, binds a polymerization-competent form of FtsZ in a 1:1 ratio, thus inhibiting FtsZ polymerization and therefore preventing it from participating in the assembly of the Z ring. This mechanism prevents the premature segregation of damaged DNA to daughter cells during cell division. The chain is Cell division inhibitor SulA from Escherichia coli O7:K1 (strain IAI39 / ExPEC).